The primary structure comprises 266 residues: 3-deoxy-manno-octulosonate cytidylyltransferase (266 aa).

Belongs to the KdsB family.

It is found in the cytoplasm. It carries out the reaction 3-deoxy-alpha-D-manno-oct-2-ulosonate + CTP = CMP-3-deoxy-beta-D-manno-octulosonate + diphosphate. Its pathway is nucleotide-sugar biosynthesis; CMP-3-deoxy-D-manno-octulosonate biosynthesis; CMP-3-deoxy-D-manno-octulosonate from 3-deoxy-D-manno-octulosonate and CTP: step 1/1. It functions in the pathway bacterial outer membrane biogenesis; lipopolysaccharide biosynthesis. In terms of biological role, activates KDO (a required 8-carbon sugar) for incorporation into bacterial lipopolysaccharide in Gram-negative bacteria. The chain is 3-deoxy-manno-octulosonate cytidylyltransferase from Paraburkholderia xenovorans (strain LB400).